Here is a 297-residue protein sequence, read N- to C-terminus: Small ribosomal subunit protein uS2 (297 aa).

A disordered region spans residues 252-297 (GVPGTAFSAATAAPTSWEADGGDWAASSAAPAGESWAETQPAEAKW). Residues 256–289 (TAFSAATAAPTSWEADGGDWAASSAAPAGESWAE) show a composition bias toward low complexity.

This sequence belongs to the universal ribosomal protein uS2 family. Component of the small ribosomal subunit. Mature ribosomes consist of a small (40S) and a large (60S) subunit. The 40S subunit contains about 33 different proteins and 1 molecule of RNA (18S). The 60S subunit contains about 49 different proteins and 3 molecules of RNA (25S, 5.8S and 5S). Interacts with rps21.

It localises to the cytoplasm. Its function is as follows. Required for the assembly and/or stability of the 40S ribosomal subunit. Required for the processing of the 20S rRNA-precursor to mature 18S rRNA in a late step of the maturation of 40S ribosomal subunits. This is Small ribosomal subunit protein uS2 (rps0) from Aspergillus fumigatus (strain CBS 144.89 / FGSC A1163 / CEA10) (Neosartorya fumigata).